A 320-amino-acid polypeptide reads, in one-letter code: Serpentine receptor class gamma-15 (320 aa).

7 consecutive transmembrane segments (helical) span residues Thr29 to Val49, Gly57 to Ile77, Phe85 to Ile105, Val151 to Pro171, Leu197 to Thr217, Ile240 to Thr260, and Leu268 to Phe288.

The protein belongs to the nematode receptor-like protein srg family.

It is found in the membrane. The polypeptide is Serpentine receptor class gamma-15 (srg-15) (Caenorhabditis elegans).